The chain runs to 208 residues: N-(5'-phosphoribosyl)anthranilate isomerase (208 aa).

Belongs to the TrpF family.

The enzyme catalyses N-(5-phospho-beta-D-ribosyl)anthranilate = 1-(2-carboxyphenylamino)-1-deoxy-D-ribulose 5-phosphate. It functions in the pathway amino-acid biosynthesis; L-tryptophan biosynthesis; L-tryptophan from chorismate: step 3/5. This is N-(5'-phosphoribosyl)anthranilate isomerase from Dechloromonas aromatica (strain RCB).